The chain runs to 616 residues: MAKVIGIDLGTTNSCVAVMEGGEPIVIANPEGNRTTPSVVAFSKTGERMTGQVAKRQAITNPERTIISIKRDMGTDHKVDIDGKKFSPQEISSMILQKLKSDAEAYLGETVTQAVITVPAYFSDAQRQATKDSGKIAGLEVLRIINEPTAAALAYGLDKEHDQKIMVYDLGGGTFDVSILEIGDGVFEVLATNGNNKLGGDDFDQRIIDFLVDTFKKESGIDLKNDKMAMQRLKEAAEKAKVELSGVTSSNINLPFITADASGPKHLDVTLTRAKFDEITADLVENTMVPTRQAMQDAGLTPDKIDKILLVGGSTRIPAVQEAVKKYLGKDPFKGINPDECVAVGAAIQAGVLTGDVTGLLLLDVTPLSLGLETLGGVFTKLIERNTTIPTKKSQVFSTAADGQTSVEIHVLQGEREMAQYNKSLGRFQLTGIPSAPRGVPQIEVTFDIDANGIVHVSAKDLGTGNEQKITITASTNLSDSDIDKAVKEAEKFAAEDKQRKEEIDVRNNADSLIYQSEKSLKDLGDKVSADDKSKIESGVNKVKDALKGTDIEVIKKATEELQQSFYDISSKIYQQTQGAQSDPGAAGFGGQQEAPGAGQDENVVDADYKVVDDDK.

Phosphothreonine; by autocatalysis is present on T174. The segment at 575-616 is disordered; sequence QQTQGAQSDPGAAGFGGQQEAPGAGQDENVVDADYKVVDDDK. Residues 607–616 are compositionally biased toward basic and acidic residues; that stretch reads ADYKVVDDDK.

The protein belongs to the heat shock protein 70 family.

Its function is as follows. Acts as a chaperone. This chain is Chaperone protein DnaK, found in Ruminiclostridium cellulolyticum (strain ATCC 35319 / DSM 5812 / JCM 6584 / H10) (Clostridium cellulolyticum).